Here is a 171-residue protein sequence, read N- to C-terminus: Spiderine-2a (171 aa).

An N-terminal signal peptide occupies residues 1–18 (MKFALVLLGVCAFYLVNA). The propeptide at 19–58 (TGDLETELEASELQELQEALDLIAETPLESLEAEELEEAR) is removed in mature form. Residues 59 to 104 (KFKLPKINWGKLASKAKDVYKKGQKLAKNKNVKKALKYGKQLAENL) form a linear cationic cytotoxin domain region. In terms of domain architecture, Oxytoxin-type inhibitor cystine knot (ICK) spans 118–171 (NNKCWAIGTRCTDDCDCCPEHHCHCPAKSWTFGLIPCSCQVTESDKVNKCPPAE). Cystine bridges form between Cys-121/Cys-135, Cys-128/Cys-140, Cys-132/Cys-167, Cys-134/Cys-156, and Cys-142/Cys-154.

In terms of processing, disulfide bonds. Expressed by the venom gland.

The protein localises to the secreted. In terms of biological role, has antimicrobial, insecticidal, cytolytic and cytotoxic activity. This chain is Spiderine-2a, found in Oxyopes takobius (Lynx spider).